A 645-amino-acid chain; its full sequence is UPF0313 protein CLM_0251 (645 aa).

Residues 295–566 (AIKEVKFSIT…RMQRALLQFS (272 aa)) form the Radical SAM core domain. Residues Cys309, Cys313, and Cys316 each contribute to the [4Fe-4S] cluster site. Residues 598–645 (NKPYKKSHKKNNAKNNNNHYNKNNNYNKNKDISKKNKKNSLSKHKKRK) are disordered. A compositionally biased stretch (basic residues) spans 600-609 (PYKKSHKKNN). Residues 610-624 (AKNNNNHYNKNNNYN) show a composition bias toward low complexity. A compositionally biased stretch (basic residues) spans 632–645 (KNKKNSLSKHKKRK).

Belongs to the UPF0313 family. It depends on [4Fe-4S] cluster as a cofactor.

The sequence is that of UPF0313 protein CLM_0251 from Clostridium botulinum (strain Kyoto / Type A2).